We begin with the raw amino-acid sequence, 461 residues long: Cysteine--tRNA ligase (461 aa).

Residue cysteine 28 coordinates Zn(2+). The 'HIGH' region motif lies at 30-40 (ITIYDLCHIGH). Cysteine 209, histidine 234, and glutamate 238 together coordinate Zn(2+). The 'KMSKS' region signature appears at 266 to 270 (KMSKS). ATP is bound at residue lysine 269.

Belongs to the class-I aminoacyl-tRNA synthetase family. In terms of assembly, monomer. Zn(2+) is required as a cofactor.

Its subcellular location is the cytoplasm. The enzyme catalyses tRNA(Cys) + L-cysteine + ATP = L-cysteinyl-tRNA(Cys) + AMP + diphosphate. The chain is Cysteine--tRNA ligase from Photorhabdus laumondii subsp. laumondii (strain DSM 15139 / CIP 105565 / TT01) (Photorhabdus luminescens subsp. laumondii).